The primary structure comprises 345 residues: Molybdopterin synthase catalytic subunit (345 aa).

Substrate contacts are provided by residues 101–102 (HR), Lys-117, and 124–126 (KKE).

This sequence belongs to the MoaE family. MOCS2B subfamily. As to quaternary structure, heterotetramer; composed of 2 small (Mocs2A) and 2 large (Mocs2B) subunits.

The protein localises to the cytoplasm. The enzyme catalyses 2 [molybdopterin-synthase sulfur-carrier protein]-C-terminal-Gly-aminoethanethioate + cyclic pyranopterin phosphate + H2O = molybdopterin + 2 [molybdopterin-synthase sulfur-carrier protein]-C-terminal Gly-Gly + 2 H(+). The protein operates within cofactor biosynthesis; molybdopterin biosynthesis. Its function is as follows. Catalytic subunit of the molybdopterin synthase complex, a complex that catalyzes the conversion of precursor Z into molybdopterin. Acts by mediating the incorporation of 2 sulfur atoms from thiocarboxylated Mocs2A into precursor Z to generate a dithiolene group. This is Molybdopterin synthase catalytic subunit from Drosophila virilis (Fruit fly).